Here is an 80-residue protein sequence, read N- to C-terminus: Protein FAM229B (80 aa).

The tract at residues 1–45 is disordered; it reads MPFRFGTQPRRFPVEGGDSSIELESGLSSSASCNGKETSPNRQLR. Residues 15 to 32 are compositionally biased toward low complexity; that stretch reads EGGDSSIELESGLSSSAS. A compositionally biased stretch (polar residues) spans 33–42; it reads CNGKETSPNR.

It belongs to the FAM229 family.

This chain is Protein FAM229B (Fam229b), found in Rattus norvegicus (Rat).